We begin with the raw amino-acid sequence, 424 residues long: Serine hydroxymethyltransferase (424 aa).

(6S)-5,6,7,8-tetrahydrofolate-binding positions include L126 and 130–132 (GHL). An N6-(pyridoxal phosphate)lysine modification is found at K235. (6S)-5,6,7,8-tetrahydrofolate is bound at residue 359–361 (SPF).

It belongs to the SHMT family. Homodimer. Requires pyridoxal 5'-phosphate as cofactor.

The protein localises to the cytoplasm. The enzyme catalyses (6R)-5,10-methylene-5,6,7,8-tetrahydrofolate + glycine + H2O = (6S)-5,6,7,8-tetrahydrofolate + L-serine. The protein operates within one-carbon metabolism; tetrahydrofolate interconversion. It functions in the pathway amino-acid biosynthesis; glycine biosynthesis; glycine from L-serine: step 1/1. Its function is as follows. Catalyzes the reversible interconversion of serine and glycine with tetrahydrofolate (THF) serving as the one-carbon carrier. This reaction serves as the major source of one-carbon groups required for the biosynthesis of purines, thymidylate, methionine, and other important biomolecules. Also exhibits THF-independent aldolase activity toward beta-hydroxyamino acids, producing glycine and aldehydes, via a retro-aldol mechanism. The protein is Serine hydroxymethyltransferase of Prochlorococcus marinus (strain MIT 9303).